Consider the following 633-residue polypeptide: Glutamyl-tRNA(Gln) amidotransferase subunit E (633 aa).

The protein belongs to the GatB/GatE family. GatE subfamily. In terms of assembly, heterodimer of GatD and GatE.

The catalysed reaction is L-glutamyl-tRNA(Gln) + L-glutamine + ATP + H2O = L-glutaminyl-tRNA(Gln) + L-glutamate + ADP + phosphate + H(+). Its function is as follows. Allows the formation of correctly charged Gln-tRNA(Gln) through the transamidation of misacylated Glu-tRNA(Gln) in organisms which lack glutaminyl-tRNA synthetase. The reaction takes place in the presence of glutamine and ATP through an activated gamma-phospho-Glu-tRNA(Gln). The GatDE system is specific for glutamate and does not act on aspartate. This is Glutamyl-tRNA(Gln) amidotransferase subunit E from Saccharolobus islandicus (strain L.S.2.15 / Lassen #1) (Sulfolobus islandicus).